The following is a 173-amino-acid chain: Shikimate kinase 2 (173 aa).

Position 12 to 17 (12 to 17 (GCGKTT)) interacts with ATP. Mg(2+) contacts are provided by Thr16 and Asp32. Positions 34, 58, and 79 each coordinate substrate. The interval 112–126 (EENPQDNQRPTLTGR) is LID domain. Arg120 is an ATP binding site. Position 139 (Arg139) interacts with substrate. Gln155 contributes to the ATP binding site.

It belongs to the shikimate kinase family. AroL subfamily. As to quaternary structure, monomer. It depends on Mg(2+) as a cofactor.

It localises to the cytoplasm. The catalysed reaction is shikimate + ATP = 3-phosphoshikimate + ADP + H(+). It participates in metabolic intermediate biosynthesis; chorismate biosynthesis; chorismate from D-erythrose 4-phosphate and phosphoenolpyruvate: step 5/7. In terms of biological role, catalyzes the specific phosphorylation of the 3-hydroxyl group of shikimic acid using ATP as a cosubstrate. The sequence is that of Shikimate kinase 2 from Pectobacterium carotovorum subsp. carotovorum (strain PC1).